A 916-amino-acid polypeptide reads, in one-letter code: Protein translocase subunit SecA (916 aa).

Residues Gln87, 105–109, and Asp512 contribute to the ATP site; that span reads GEGKT. A disordered region spans residues 857–916; the sequence is QHAEAPSMEQAVAGEEEELPEGPAPVVPLEPVRNEQKIGRNEPCPCGSGKKYKHCHGQLD. Residues Cys900, Cys902, Cys911, and His912 each contribute to the Zn(2+) site. Over residues 906-916 the composition is skewed to basic residues; that stretch reads KKYKHCHGQLD.

Belongs to the SecA family. Monomer and homodimer. Part of the essential Sec protein translocation apparatus which comprises SecA, SecYEG and auxiliary proteins SecDF-YajC and YidC. It depends on Zn(2+) as a cofactor.

The protein localises to the cell inner membrane. It is found in the cytoplasm. The catalysed reaction is ATP + H2O + cellular proteinSide 1 = ADP + phosphate + cellular proteinSide 2.. In terms of biological role, part of the Sec protein translocase complex. Interacts with the SecYEG preprotein conducting channel. Has a central role in coupling the hydrolysis of ATP to the transfer of proteins into and across the cell membrane, serving both as a receptor for the preprotein-SecB complex and as an ATP-driven molecular motor driving the stepwise translocation of polypeptide chains across the membrane. This chain is Protein translocase subunit SecA, found in Pseudomonas aeruginosa (strain UCBPP-PA14).